The primary structure comprises 376 residues: Putative glutamate--cysteine ligase 2-1 (376 aa).

It belongs to the glutamate--cysteine ligase type 2 family. YbdK subfamily.

It catalyses the reaction L-cysteine + L-glutamate + ATP = gamma-L-glutamyl-L-cysteine + ADP + phosphate + H(+). In terms of biological role, ATP-dependent carboxylate-amine ligase which exhibits weak glutamate--cysteine ligase activity. This is Putative glutamate--cysteine ligase 2-1 from Rubrobacter xylanophilus (strain DSM 9941 / JCM 11954 / NBRC 16129 / PRD-1).